The following is a 261-amino-acid chain: Uridine-cytidine kinase 2 (261 aa).

Polar residues predominate over residues 1-16; the sequence is MAGDSEQTLQNHQQPN. Residues 1–24 are disordered; it reads MAGDSEQTLQNHQQPNGGEPFLIG. Ala-2 bears the N-acetylalanine mark. 27–35 is a binding site for ATP; it reads GGTASGKSS. Positions 84, 112, 117, 166, 176, and 184 each coordinate substrate. Asp-213 contributes to the ATP binding site. The disordered stretch occupies residues 240–261; that stretch reads GYLNGYTPSRKRQASESSSRPH. At Ser-254 the chain carries Phosphoserine.

This sequence belongs to the uridine kinase family. As to quaternary structure, homotetramer.

It catalyses the reaction uridine + ATP = UMP + ADP + H(+). It carries out the reaction cytidine + ATP = CMP + ADP + H(+). It functions in the pathway pyrimidine metabolism; CTP biosynthesis via salvage pathway; CTP from cytidine: step 1/3. The protein operates within pyrimidine metabolism; UMP biosynthesis via salvage pathway; UMP from uridine: step 1/1. Functionally, phosphorylates uridine and cytidine to uridine monophosphate and cytidine monophosphate. Does not phosphorylate deoxyribonucleosides or purine ribonucleosides. Can use ATP or GTP as a phosphate donor. This chain is Uridine-cytidine kinase 2 (Uck2), found in Mus musculus (Mouse).